Reading from the N-terminus, the 342-residue chain is Oxygen-dependent coproporphyrinogen-III oxidase (342 aa).

S98 provides a ligand contact to substrate. 2 residues coordinate a divalent metal cation: H102 and H112. The Proton donor role is filled by H112. 114 to 116 is a substrate binding site; the sequence is NYR. Positions 146 and 176 each coordinate a divalent metal cation. The important for dimerization stretch occupies residues 266–301; the sequence is YVEFNLVWDRGTIFGLQTNGRTESILMSLPPLARWE.

This sequence belongs to the aerobic coproporphyrinogen-III oxidase family. In terms of assembly, homodimer. A divalent metal cation is required as a cofactor.

It localises to the cytoplasm. It catalyses the reaction coproporphyrinogen III + O2 + 2 H(+) = protoporphyrinogen IX + 2 CO2 + 2 H2O. The protein operates within porphyrin-containing compound metabolism; protoporphyrin-IX biosynthesis; protoporphyrinogen-IX from coproporphyrinogen-III (O2 route): step 1/1. Involved in the heme and chlorophyll biosynthesis. Catalyzes the aerobic oxidative decarboxylation of propionate groups of rings A and B of coproporphyrinogen-III to yield the vinyl groups in protoporphyrinogen-IX. This Prochlorococcus marinus subsp. pastoris (strain CCMP1986 / NIES-2087 / MED4) protein is Oxygen-dependent coproporphyrinogen-III oxidase.